Consider the following 549-residue polypeptide: Guanine nucleotide-binding protein-like 3 (549 aa).

Residues 1–45 are compositionally biased toward basic residues; sequence MKRPKLKKASKRMTCHKRYKIQKKVREHHRKLRKEAKKRGHKKPR. Disordered regions lie at residues 1–56 and 73–104; these read MKRP…SAPF and ELKQQQKLDRQKELEKKRKLETNPDIKPSNVE. Residues 2–46 are basic; it reads KRPKLKKASKRMTCHKRYKIQKKVREHHRKLRKEAKKRGHKKPRK. The stretch at 56–95 forms a coiled coil; it reads FKEALLREAELRKQRLEELKQQQKLDRQKELEKKRKLETN. Positions 73 to 96 are enriched in basic and acidic residues; that stretch reads ELKQQQKLDRQKELEKKRKLETNP. Lys79 is modified (N6-acetyllysine). Residues Lys91 and Lys99 each participate in a glycyl lysine isopeptide (Lys-Gly) (interchain with G-Cter in SUMO2) cross-link. Ser101 is modified (phosphoserine). Glycyl lysine isopeptide (Lys-Gly) (interchain with G-Cter in SUMO2) cross-links involve residues Lys114, Lys179, Lys196, Lys253, Lys267, and Lys275. A CP-type G domain is found at 131–312; the sequence is CQELKKVIEA…IIDSPSFIVS (182 aa). 178–181 contacts GTP; sequence NKSD. Residue 261-268 participates in GTP binding; it reads GFPNVGKS. Residues 282–456 are intermediate; the sequence is VGVSMGLTRS…HLANSILFQS (175 aa). Position 305–308 (305–308) interacts with GTP; sequence DSPS. Residues 465–543 are acidic; that stretch reads EEKDIHEELP…KIIEEDDAYD (79 aa). Residues 474-483 are compositionally biased toward basic and acidic residues; sequence PKRKERKQEE. A disordered region spans residues 474–532; sequence PKRKERKQEEREDDKDSDQETVDEEVDENSSGMFAAEETGEALSEETTAGEQSTRSFIL. The segment covering 484-501 has biased composition (acidic residues); it reads REDDKDSDQETVDEEVDE. Phosphoserine occurs at positions 490, 504, 517, and 529. The span at 518–529 shows a compositional bias: polar residues; that stretch reads EETTAGEQSTRS.

This sequence belongs to the TRAFAC class YlqF/YawG GTPase family. Interacts with MDM2; this interaction stabilizes MDM2. Interaction with MDM2 occurs in the nucleoplasm and is triggered by a nucleolar release mechanism, such as mitosis-induced nucleolar disassembly. Indirectly interacts with TP53, via MDM2-binding. Interacts with TSC22D1 isoform 2. Increased levels in lung tissue in cancer patients.

It localises to the nucleus. The protein resides in the nucleolus. In terms of biological role, may be required to maintain the proliferative capacity of stem cells. Stabilizes MDM2 by preventing its ubiquitination, and hence proteasomal degradation. This is Guanine nucleotide-binding protein-like 3 (GNL3) from Homo sapiens (Human).